Here is a 435-residue protein sequence, read N- to C-terminus: Tol-Pal system protein TolB (435 aa).

A signal peptide spans 1–26 (MKTFSLLRILIVLVGMAGAFATPAMA).

This sequence belongs to the TolB family. The Tol-Pal system is composed of five core proteins: the inner membrane proteins TolA, TolQ and TolR, the periplasmic protein TolB and the outer membrane protein Pal. They form a network linking the inner and outer membranes and the peptidoglycan layer.

Its subcellular location is the periplasm. Functionally, part of the Tol-Pal system, which plays a role in outer membrane invagination during cell division and is important for maintaining outer membrane integrity. This chain is Tol-Pal system protein TolB, found in Allorhizobium ampelinum (strain ATCC BAA-846 / DSM 112012 / S4) (Agrobacterium vitis (strain S4)).